A 508-amino-acid polypeptide reads, in one-letter code: Splicing regulatory glutamine/lysine-rich protein 1 (508 aa).

Residues 66-142 (RTVYVGNLNS…RPLKINHSNN (77 aa)) enclose the RRM domain. 2 positions are modified to phosphoserine: S171 and S184. The tract at residues 173–508 (ISAAIEPESG…ENLSTKTEAV (336 aa)) is disordered. Positions 180–189 (ESGKSNERKG) are enriched in basic and acidic residues. The span at 190-259 (GRSRSHTRSK…KSRSRSHSRD (70 aa)) shows a compositional bias: basic residues. A compositionally biased stretch (basic and acidic residues) spans 260–355 (KRKDTREKIK…DRSKEIDEKR (96 aa)). T363 carries the post-translational modification Phosphothreonine. Over residues 372-388 (RRSRSSSRERRRRRSRS) the composition is skewed to basic residues. Residues 419 to 488 (REKERDHISE…DAPRTEENKI (70 aa)) are compositionally biased toward basic and acidic residues. Residues 489–508 (QHNGNCQLNEENLSTKTEAV) are compositionally biased toward polar residues. Residue K504 forms a Glycyl lysine isopeptide (Lys-Gly) (interchain with G-Cter in SUMO2) linkage.

It belongs to the splicing factor SR family. Homodimer. Binds SFRS1, SFRS2, SFRS3 and SFRS6. Interacts with the spliceosome. Interacts with SREK1IP1.

The protein localises to the nucleus. In terms of biological role, participates in the regulation of alternative splicing by modulating the activity of other splice facors. Inhibits the splicing activity of SFRS1, SFRS2 and SFRS6. Augments the splicing activity of SFRS3. In Homo sapiens (Human), this protein is Splicing regulatory glutamine/lysine-rich protein 1 (SREK1).